Here is a 177-residue protein sequence, read N- to C-terminus: MKLPKEGDFITIQSYKHDGSLHRTWRDTMVLKTTENALIGVNDHTLVTENDGRRWVTREPAIVYFHKKYWFNIIAMIRDNGVSYYCNLASPYVLDGEALKYIDYDLDVKVFSDGEKRLLDVDEYEVHKVKMAYPSDIDYILKENVKVLVDWIKHKKGPFSEAYIKIWYKRYLELKNR.

R23 functions as the Proton donor in the catalytic mechanism. 6 residues coordinate Mg(2+): N87, D103, D105, D107, D120, and E123.

Belongs to the Ntdp family. Requires Mg(2+) as cofactor.

It catalyses the reaction a ribonucleoside 5'-triphosphate + H2O = a ribonucleoside 5'-diphosphate + phosphate + H(+). The catalysed reaction is a ribonucleoside 5'-diphosphate + H2O = a ribonucleoside 5'-phosphate + phosphate + H(+). Has nucleoside phosphatase activity towards nucleoside triphosphates and nucleoside diphosphates. This chain is Nucleoside triphosphate/diphosphate phosphatase, found in Streptococcus uberis (strain ATCC BAA-854 / 0140J).